A 221-amino-acid polypeptide reads, in one-letter code: 7-cyano-7-deazaguanine synthase (221 aa).

7-17 is a binding site for ATP; sequence LSGGLDSAVSL. Zn(2+)-binding residues include C192, C200, C203, and C206.

The protein belongs to the QueC family. In terms of assembly, homodimer. Zn(2+) is required as a cofactor.

The catalysed reaction is 7-carboxy-7-deazaguanine + NH4(+) + ATP = 7-cyano-7-deazaguanine + ADP + phosphate + H2O + H(+). It functions in the pathway purine metabolism; 7-cyano-7-deazaguanine biosynthesis. Functionally, catalyzes the ATP-dependent conversion of 7-carboxy-7-deazaguanine (CDG) to 7-cyano-7-deazaguanine (preQ(0)). The chain is 7-cyano-7-deazaguanine synthase from Pelotomaculum thermopropionicum (strain DSM 13744 / JCM 10971 / SI).